The sequence spans 652 residues: Potassium voltage-gated channel subfamily KQT member 1 (652 aa).

The Cytoplasmic segment spans residues 1–110; the sequence is MSSEQPAWTF…YNFLERPTGW (110 aa). A helical transmembrane segment spans residues 111–132; sequence KCFVYHFTVFLIVLICLIFSVL. The Extracellular segment spans residues 133–143; it reads STIQQYNNLAT. A helical transmembrane segment spans residues 144 to 166; that stretch reads ETLFWMEIVLVVFFGAEYVVRLW. At 167–182 the chain is on the cytoplasmic side; it reads SAGCRSKYVGVWGRLR. A helical transmembrane segment spans residues 183-208; it reads FARKPISVIDLIVVVASVIVLCVGSN. At 209–216 the chain is on the extracellular side; it reads GQVFATSA. The helical; Voltage-sensor transmembrane segment at 217–232 threads the bilayer; that stretch reads IRGIRFLQILRMLHVD. The tract at residues 228-236 is interaction with KCNE3; that stretch reads MLHVDRQGG. At 233–250 the chain is on the cytoplasmic side; the sequence is RQGGTWRLLGSVVFIHRQ. Gln-234 is a binding site for a 1,2-diacyl-sn-glycero-3-phospho-(1D-myo-inositol-4,5-bisphosphate). A helical membrane pass occupies residues 251–273; it reads ELITTLYIGFLGLIFSSYFVYLA. The Extracellular portion of the chain corresponds to 274-289; the sequence is EKDAIDSSGEYQFGSY. Positions 290–310 form an intramembrane region, pore-forming; it reads ADALWWGVVTVTTIGYGDKVP. Residues 311–312 are Extracellular-facing; the sequence is QT. A helical membrane pass occupies residues 313-338; the sequence is WIGKTIASCFSVFAISFFALPAGILG. Residues 339 to 652 are Cytoplasmic-facing; it reads SGFALKVQQK…VPRMTQDNIS (314 aa). The tract at residues 360–372 is interaction with CALM; sequence AAASLIQTAWRCY. The interval 393 to 419 is disordered; the sequence is HHLMSPSPKPKKSAMVKKKKIRTERDE. Residues 401-414 are compositionally biased toward basic residues; sequence KPKKSAMVKKKKIR. The interval 504 to 518 is interaction with CALM; calcium-dependent; that stretch reads KVIRRMQYFVAKKKF. The interaction with KCNE1 C-terminus stretch occupies residues 524–561; sequence PYDVRDVIEQYSQGHLNLMVRIKELQRRLDQSLGKPSL. Residues 577–605 form an interaction with AKAP9 region; that stretch reads IGSRLNRVEDKVTQMDHKLNLITDMLHHL. A C-terminal assembly domain (tetramerization) region spans residues 578 to 609; the sequence is GSRLNRVEDKVTQMDHKLNLITDMLHHLLTNQ. Residues 609–652 are disordered; the sequence is QQGSQSIRTPHRSNSLNSENHPSRNTLPTYEQLNVPRMTQDNIS.

Belongs to the potassium channel family. KQT (TC 1.A.1.15) subfamily. Kv7.1/KCNQ1 sub-subfamily. In terms of assembly, tetramer. Heterotetramer with KCNE1; targets to the membrane raft. Interacts (via C-terminus) with CALM; forms a heterotetramer in a calcium-independent manner. Interacts with KCNE2; form a heterooligomer complex that targets to the membrane raft and leading to currents with an apparently instantaneous activation, a rapid deactivation process and a linear current-voltage relationship and decreases the amplitude of the outward current. Interacts with KCNE3; four KCNE3 molecules are bound to one KCNQ1 tetramer (4:4 KCNQ1:KCNE3 stoichiometry); alters membrane raft localization; affects KCNQ1 structure and gating properties. Interacts with KCNE4; impairs KCNQ1 localization in lipid rafts and inhibits voltage-gated potassium channel activity. Interacts with KCNE5; impairs KCNQ1 localization in lipid rafts and only conducts current upon strong and continued depolarization.

The protein resides in the cell membrane. The protein localises to the cytoplasmic vesicle membrane. Its subcellular location is the membrane raft. It localises to the endoplasmic reticulum. It is found in the basolateral cell membrane. It catalyses the reaction K(+)(in) = K(+)(out). Its activity is regulated as follows. PIP2 molecule is essential to activate KCNQ channels by inducing the coupling of the voltage-sensing domain (VSD) and the pore-forming domain (PD). Upon channel activation, PIP2 disrupts the VSD-calmodulin/CALM interactions, causing the release of CALM from the VSD which triggers the opening of the gate. Calcium potentiates KCNQ1 channel current through calcium-bound CALM. Calcium-bound CALM competes with PIP2 to stabilize the channel open state. In terms of biological role, pore-forming subunit of the voltage-gated potassium (Kv) channel involved in the regulation of cardiomyocyte excitability and important in normal development and functions of myocardium, inner ear, stomach and colon. Associates with KCNE beta subunits that modulates current kinetics. Induces a voltage-dependent by rapidly activating and slowly deactivating potassium-selective outward current. Also promotes a delayed voltage activated potassium current showing outward rectification characteristic. During beta-adrenergic receptor stimulation participates in cardiac repolarization by associating with KCNE1 to form the I(Ks) cardiac potassium current that increases the amplitude and slows down the activation kinetics of outward potassium current I(Ks). When associated with KCNE3, forms the potassium channel that is important for cyclic AMP-stimulated intestinal secretion of chloride ions. When associated with KCNE2, forms a heterooligomer complex leading to currents with an apparently instantaneous activation, a rapid deactivation process and a linear current-voltage relationship and decreases the amplitude of the outward current. When associated with KCNE4, inhibits voltage-gated potassium channel activity. When associated with KCNE5, this complex only conducts current upon strong and continued depolarization. This chain is Potassium voltage-gated channel subfamily KQT member 1, found in Xenopus laevis (African clawed frog).